The following is a 545-amino-acid chain: Chaperonin GroEL 1 (545 aa).

ATP-binding positions include 30–33 (TLGP), lysine 51, 87–91 (DGTTT), glycine 415, and aspartate 495.

This sequence belongs to the chaperonin (HSP60) family. As to quaternary structure, forms a cylinder of 14 subunits composed of two heptameric rings stacked back-to-back. Interacts with the co-chaperonin GroES.

Its subcellular location is the cytoplasm. The catalysed reaction is ATP + H2O + a folded polypeptide = ADP + phosphate + an unfolded polypeptide.. Together with its co-chaperonin GroES, plays an essential role in assisting protein folding. The GroEL-GroES system forms a nano-cage that allows encapsulation of the non-native substrate proteins and provides a physical environment optimized to promote and accelerate protein folding. The protein is Chaperonin GroEL 1 of Sinorhizobium medicae (strain WSM419) (Ensifer medicae).